The sequence spans 824 residues: Ras guanine nucleotide exchange factor I (824 aa).

Disordered stretches follow at residues 1–51 (MSNP…KPTK) and 65–167 (GSNL…LILD). Positions 8 to 41 (SNSTNGSSNSLNGESVSPNRLGSSPGSPISKASS) are enriched in low complexity. The segment covering 83-95 (NSSVGLLNNSTGS) has biased composition (polar residues). A compositionally biased stretch (low complexity) spans 104–116 (SSPKSSYILSSSI). Gly residues predominate over residues 117 to 128 (GSGGSGGGGGSS). A compositionally biased stretch (low complexity) spans 136 to 167 (SASNNSSGPRSRSGSLGKNNSSQQNNNNLILD). One can recognise a LisH domain in the interval 223-255 (GRDNILQLILQHLQFEGLMDSRKILEEEAKIQY). Disordered regions lie at residues 330-354 (YVDEKDNDKPSKDSPTTATTTTTAT) and 398-425 (NTQQQQATPNTPPQGLKSTQSITGSTGT). Residues 331 to 341 (VDEKDNDKPSK) show a composition bias toward basic and acidic residues. Over residues 343–354 (SPTTATTTTTAT) the composition is skewed to low complexity. Positions 413-425 (LKSTQSITGSTGT) are enriched in polar residues. In terms of domain architecture, N-terminal Ras-GEF spans 426–551 (LGPQVKAASL…VISDALNSGL (126 aa)). Residues 585–816 (DEEEISRQLT…YTRSMSFEPR (232 aa)) enclose the Ras-GEF domain.

Its function is as follows. Promotes the exchange of Ras-bound GDP by GTP. In Dictyostelium discoideum (Social amoeba), this protein is Ras guanine nucleotide exchange factor I (gefI).